We begin with the raw amino-acid sequence, 388 residues long: Succinate--CoA ligase [ADP-forming] subunit beta (388 aa).

One can recognise an ATP-grasp domain in the interval 9–244 (KELFRTYGIP…TDEEDPLEVE (236 aa)). Residues lysine 46, 53–55 (GRG), glutamate 99, valine 102, and glutamate 107 each bind ATP. Asparagine 199 and aspartate 213 together coordinate Mg(2+). Substrate is bound by residues asparagine 264 and 321–323 (GIL).

This sequence belongs to the succinate/malate CoA ligase beta subunit family. In terms of assembly, heterotetramer of two alpha and two beta subunits. Mg(2+) is required as a cofactor.

It catalyses the reaction succinate + ATP + CoA = succinyl-CoA + ADP + phosphate. The enzyme catalyses GTP + succinate + CoA = succinyl-CoA + GDP + phosphate. Its pathway is carbohydrate metabolism; tricarboxylic acid cycle; succinate from succinyl-CoA (ligase route): step 1/1. Its function is as follows. Succinyl-CoA synthetase functions in the citric acid cycle (TCA), coupling the hydrolysis of succinyl-CoA to the synthesis of either ATP or GTP and thus represents the only step of substrate-level phosphorylation in the TCA. The beta subunit provides nucleotide specificity of the enzyme and binds the substrate succinate, while the binding sites for coenzyme A and phosphate are found in the alpha subunit. The protein is Succinate--CoA ligase [ADP-forming] subunit beta of Desulfosudis oleivorans (strain DSM 6200 / JCM 39069 / Hxd3) (Desulfococcus oleovorans).